The following is a 568-amino-acid chain: MEAKIVKVSDSSYKDGLGKKRKHPGNYTPYDSGRSYAKLQWVLSPNSSTQKLEKRRNLDGENKVIVSENHVEKSLVRYFSYYKKTGVPKRVMFHENGEWIDLPDHILCDIRNDLEAKRATIEFNWCGRHFLLDFLHMYRLDLETGVKTQLAWIDIAGKCFFPETFDTLERDGCHHIRGEDPEQHDQREIKLHIEIDVNSGELPRLNLNVVTDESGDNMDDFQAVQRSSNGPNDEASEDSCSRELDDAVEKWDKTETDRFSGVKPAEEELDKDAVKQMFALGAATLGHVESLDVYQFSSEIAKARLSLFQKQADITKKHRGDANIRYAWVPAKKEVLSAVMMHGLGVGGAFIKKSMYGVGVHAANCPYFSARYCDIDDNGVRHMVLCRVIMGNMEPLRGDNTQYFTGGEEYDNGVDDVESPKHYLIWNMNMNTHIYPEFVVSFKLSIPNAEGNILPTTQSRHESSGLTLEGPKGSPSNEPGRVSNGGSGSEKNSSSSRRPRSPIMPFPLLFKAISSKIARKDMDLIIAGYQELREKKVSRKEFYKTLSMIVGDDDLLISTITGLQRSLG.

Residues 1-18 (MEAKIVKVSDSSYKDGLG) are compositionally biased toward basic and acidic residues. The interval 1–32 (MEAKIVKVSDSSYKDGLGKKRKHPGNYTPYDS) is disordered. Residues 77–152 (RYFSYYKKTG…ETGVKTQLAW (76 aa)) enclose the WWE domain. Disordered stretches follow at residues 220-241 (DFQAVQRSSNGPNDEASEDSCS) and 453-500 (ILPT…RRPR). Positions 245 to 463 (DDAVEKWDKT…LPTTQSRHES (219 aa)) constitute a PARP catalytic domain. One can recognise an RST domain in the interval 497-568 (RRPRSPIMPF…TITGLQRSLG (72 aa)).

In terms of assembly, interacts with DREB2A, DREB2B, DREB2C and NAC082. In terms of tissue distribution, expressed in young developing tissues, such as young leaves and flowers and root tips. In mature plants, expressed in vasculature of leaves and roots.

The protein localises to the nucleus matrix. Probable inactive ADP-ribosyltransferase that functions with RCD1 to regulate oxidative stress, hormonal and developmental responses. May regulate some stress-responsive genes. Seems to play a smaller developmental role than R. The sequence is that of Probable inactive poly [ADP-ribose] polymerase SRO1 (SRO1) from Arabidopsis thaliana (Mouse-ear cress).